Consider the following 169-residue polypeptide: Succinate dehydrogenase cytochrome b560 subunit, mitochondrial (169 aa).

Residues 1-29 (MAALLLRHVGRHCLRAHLSPQLCIRNAVP) constitute a mitochondrion transit peptide. Topologically, residues 30–62 (LGTTAKEEMERFWSKNTTLNRPLSPHISIYGWS) are mitochondrial matrix. The chain crosses the membrane as a helical span at residues 63-92 (LPMAMSICHRGTGIALSAGVSLFGLSALLV). Residues 93–112 (PGSFESHLEFVKSLCLGPAL) lie on the Mitochondrial intermembrane side of the membrane. Residues 113 to 137 (IHTAKFALVFPLMYHTWNGIRHLMW) traverse the membrane as a helical segment. A heme b-binding site is contributed by His127. Residues 138-144 (DLGKGLT) are Mitochondrial matrix-facing. Residues 145-166 (ISQLHQSGVAVLVLTVLSSVGL) form a helical membrane-spanning segment. Topologically, residues 167 to 169 (AAM) are mitochondrial intermembrane.

It belongs to the cytochrome b560 family. In terms of assembly, component of complex II composed of four subunits: the flavoprotein (FP) SDHA, iron-sulfur protein (IP) SDHB, and a cytochrome b560 composed of SDHC and SDHD. The cofactor is heme b. In terms of processing, the N-terminus is blocked.

Its subcellular location is the mitochondrion inner membrane. The protein operates within carbohydrate metabolism; tricarboxylic acid cycle. In terms of biological role, membrane-anchoring subunit of succinate dehydrogenase (SDH) that is involved in complex II of the mitochondrial electron transport chain and is responsible for transferring electrons from succinate to ubiquinone (coenzyme Q). SDH also oxidizes malate to the non-canonical enol form of oxaloacetate, enol-oxaloacetate. Enol-oxaloacetate, which is a potent inhibitor of the succinate dehydrogenase activity, is further isomerized into keto-oxaloacetate. This Bos taurus (Bovine) protein is Succinate dehydrogenase cytochrome b560 subunit, mitochondrial (SDHC).